The chain runs to 553 residues: 2-succinyl-5-enolpyruvyl-6-hydroxy-3-cyclohexene-1-carboxylate synthase (553 aa).

It belongs to the TPP enzyme family. MenD subfamily. As to quaternary structure, homodimer. The cofactor is Mg(2+). Mn(2+) is required as a cofactor. Requires thiamine diphosphate as cofactor.

The enzyme catalyses isochorismate + 2-oxoglutarate + H(+) = 5-enolpyruvoyl-6-hydroxy-2-succinyl-cyclohex-3-ene-1-carboxylate + CO2. The protein operates within quinol/quinone metabolism; 1,4-dihydroxy-2-naphthoate biosynthesis; 1,4-dihydroxy-2-naphthoate from chorismate: step 2/7. Its pathway is quinol/quinone metabolism; menaquinone biosynthesis. In terms of biological role, catalyzes the thiamine diphosphate-dependent decarboxylation of 2-oxoglutarate and the subsequent addition of the resulting succinic semialdehyde-thiamine pyrophosphate anion to isochorismate to yield 2-succinyl-5-enolpyruvyl-6-hydroxy-3-cyclohexene-1-carboxylate (SEPHCHC). This is 2-succinyl-5-enolpyruvyl-6-hydroxy-3-cyclohexene-1-carboxylate synthase from Thermobifida fusca (strain YX).